Consider the following 39-residue polypeptide: Potassium channel toxin alpha-KTx 2.23 (39 aa).

Disulfide bonds link Cys-7–Cys-29, Cys-13–Cys-34, and Cys-17–Cys-36.

As to expression, expressed by the venom gland.

Its subcellular location is the secreted. Its function is as follows. Blocks human voltage-gated potassium (Kv) channels Kv1.1/KCNA1, Kv1.2/KCNA2 and Kv1.3/KCNA3. The sequence is that of Potassium channel toxin alpha-KTx 2.23 from Centruroides bonito (Scorpion).